The primary structure comprises 289 residues: D-alanine aminotransferase (289 aa).

A substrate-binding site is contributed by Tyr31. Residue Arg50 coordinates pyridoxal 5'-phosphate. Substrate-binding residues include Arg99 and His101. Residue Lys147 is the Proton acceptor of the active site. Lys147 carries the post-translational modification N6-(pyridoxal phosphate)lysine. Glu179 serves as a coordination point for pyridoxal 5'-phosphate.

This sequence belongs to the class-IV pyridoxal-phosphate-dependent aminotransferase family. Homodimer. Pyridoxal 5'-phosphate is required as a cofactor.

It catalyses the reaction D-alanine + 2-oxoglutarate = D-glutamate + pyruvate. Functionally, acts on the D-isomers of alanine, leucine, aspartate, glutamate, aminobutyrate, norvaline and asparagine. The enzyme transfers an amino group from a substrate D-amino acid to the pyridoxal phosphate cofactor to form pyridoxamine and an alpha-keto acid in the first half-reaction. The second half-reaction is the reverse of the first, transferring the amino group from the pyridoxamine to a second alpha-keto acid to form the product D-amino acid via a ping-pong mechanism. This is an important process in the formation of D-alanine and D-glutamate, which are essential bacterial cell wall components. This chain is D-alanine aminotransferase (dat), found in Listeria monocytogenes serotype 4b (strain F2365).